The primary structure comprises 702 residues: Polyribonucleotide nucleotidyltransferase (702 aa).

2 residues coordinate Mg(2+): D487 and D493. The region spanning 554–613 is the KH domain; the sequence is PRLLTIKIHPDKIREVIGKGGSTIQAITKETGTQIDIQDDGTIVIASVNAIAAQAAKARI. One can recognise an S1 motif domain in the interval 623-691; sequence GRIYEGKVAK…KQGRIRLSMK (69 aa).

Belongs to the polyribonucleotide nucleotidyltransferase family. As to quaternary structure, component of the RNA degradosome, which is a multiprotein complex involved in RNA processing and mRNA degradation. Mg(2+) is required as a cofactor.

The protein resides in the cytoplasm. The enzyme catalyses RNA(n+1) + phosphate = RNA(n) + a ribonucleoside 5'-diphosphate. Its function is as follows. Involved in mRNA degradation. Catalyzes the phosphorolysis of single-stranded polyribonucleotides processively in the 3'- to 5'-direction. This is Polyribonucleotide nucleotidyltransferase from Stenotrophomonas maltophilia (strain K279a).